We begin with the raw amino-acid sequence, 467 residues long: Glutamate--tRNA ligase (467 aa).

Positions 9–19 (PSPTGYLHIGG) match the 'HIGH' region motif. A 'KMSKS' region motif is present at residues 237–241 (KLSKR). K240 contributes to the ATP binding site.

It belongs to the class-I aminoacyl-tRNA synthetase family. Glutamate--tRNA ligase type 1 subfamily. As to quaternary structure, monomer.

It is found in the cytoplasm. It catalyses the reaction tRNA(Glu) + L-glutamate + ATP = L-glutamyl-tRNA(Glu) + AMP + diphosphate. In terms of biological role, catalyzes the attachment of glutamate to tRNA(Glu) in a two-step reaction: glutamate is first activated by ATP to form Glu-AMP and then transferred to the acceptor end of tRNA(Glu). This Xanthomonas campestris pv. campestris (strain B100) protein is Glutamate--tRNA ligase.